We begin with the raw amino-acid sequence, 313 residues long: NADH-ubiquinone oxidoreductase chain 1 (313 aa).

10 helical membrane passes run 6 to 26, 31 to 51, 62 to 82, 84 to 104, 109 to 129, 142 to 162, 183 to 203, 216 to 235, 250 to 270, and 286 to 306; these read IIIIIIIDILVVLILTGFVSL, ILALVQIRIGPALCFFGILTP, FIIFVISFDIIYLIGAMIITA, CIFLGWFYFPIGFILLLDTGF, MLCVHVFCSMFSTFFVGCFLF, MFFSIISESGIFLLYTTIYSL, FYIAGVLFISVFWVSMLLDGL, LVAGLITELSGFFFVLYSVL, LCFGGLFICFKAILILIFGFF, and AFILIFLFYMCVLMFIWLFTT.

Belongs to the complex I subunit 1 family.

It localises to the mitochondrion inner membrane. The catalysed reaction is a ubiquinone + NADH + 5 H(+)(in) = a ubiquinol + NAD(+) + 4 H(+)(out). Its function is as follows. Core subunit of the mitochondrial membrane respiratory chain NADH dehydrogenase (Complex I) that is believed to belong to the minimal assembly required for catalysis. Complex I functions in the transfer of electrons from NADH to the respiratory chain. The immediate electron acceptor for the enzyme is believed to be ubiquinone. This chain is NADH-ubiquinone oxidoreductase chain 1 (ND1), found in Leishmania tarentolae (Sauroleishmania tarentolae).